The following is a 266-amino-acid chain: Glutamate racemase (266 aa).

Residues 9 to 10 (DS) and 41 to 42 (YG) contribute to the substrate site. The active-site Proton donor/acceptor is the cysteine 73. Position 74-75 (74-75 (NT)) interacts with substrate. Catalysis depends on cysteine 183, which acts as the Proton donor/acceptor. A substrate-binding site is contributed by 184–185 (TH).

The protein belongs to the aspartate/glutamate racemases family.

The catalysed reaction is L-glutamate = D-glutamate. It functions in the pathway cell wall biogenesis; peptidoglycan biosynthesis. In terms of biological role, provides the (R)-glutamate required for cell wall biosynthesis. The protein is Glutamate racemase of Shewanella woodyi (strain ATCC 51908 / MS32).